The sequence spans 43 residues: Protein PsbN (43 aa).

The chain crosses the membrane as a helical span at residues 4-24 (ATIIVIFVSSLLVGITAYSVY).

Belongs to the PsbN family.

The protein resides in the plastid. The protein localises to the chloroplast thylakoid membrane. Its function is as follows. May play a role in photosystem I and II biogenesis. This chain is Protein PsbN, found in Thalassiosira pseudonana (Marine diatom).